The sequence spans 261 residues: Lysoplasmalogenase (261 aa).

8 helical membrane passes run 29–49, 65–85, 90–107, 111–133, 146–166, 172–192, 197–217, and 227–247; these read GWVV…VIAL, PAFK…HPIG, WLVP…LLAI, TWAF…GALL, VAAV…FWPH, LTIP…TALL, TIWT…IGIG, and AVPI…GFFF.

This sequence belongs to the TMEM86 family.

The protein localises to the cell membrane. It carries out the reaction a 1-O-(1Z-alkenyl)-sn-glycero-3-phosphocholine + H2O = a 2,3-saturated aldehyde + sn-glycerol 3-phosphocholine. It catalyses the reaction a 1-O-(1Z-alkenyl)-sn-glycero-3-phosphoethanolamine + H2O = a 2,3-saturated aldehyde + sn-glycero-3-phosphoethanolamine. Functionally, specifically hydrolyzes the vinyl ether bond of lysoplasmenylcholine (pLPC) and lysoplasmenylethanolamine (pLPE) to release a fatty aldehyde and glycerophospho-choline or glycerophospho-ethanolamine. The protein is Lysoplasmalogenase of Mycobacterium bovis (strain ATCC BAA-935 / AF2122/97).